Consider the following 120-residue polypeptide: Large ribosomal subunit protein uL24 (120 aa).

Belongs to the universal ribosomal protein uL24 family. Part of the 50S ribosomal subunit.

Its function is as follows. One of two assembly initiator proteins, it binds directly to the 5'-end of the 23S rRNA, where it nucleates assembly of the 50S subunit. Functionally, located at the polypeptide exit tunnel on the outside of the subunit. The polypeptide is Large ribosomal subunit protein uL24 (Archaeoglobus fulgidus (strain ATCC 49558 / DSM 4304 / JCM 9628 / NBRC 100126 / VC-16)).